The sequence spans 149 residues: Transcriptional repressor NrdR (149 aa).

A zinc finger spans residues 3–34 (CPFCSAVDTKVIDSRLVGEGSQVRRRRQCLVC). The ATP-cone domain maps to 49–139 (PRVIKSNEVR…VYRSFEDIRE (91 aa)).

This sequence belongs to the NrdR family. Zn(2+) serves as cofactor.

In terms of biological role, negatively regulates transcription of bacterial ribonucleotide reductase nrd genes and operons by binding to NrdR-boxes. The sequence is that of Transcriptional repressor NrdR from Pectobacterium atrosepticum (strain SCRI 1043 / ATCC BAA-672) (Erwinia carotovora subsp. atroseptica).